A 505-amino-acid chain; its full sequence is Cobyric acid synthase (505 aa).

One can recognise a GATase cobBQ-type domain in the interval 260-453; the sequence is RIAVAAIYFP…FHGIIDEPEV (194 aa). Residue Cys-341 is the Nucleophile of the active site. The active site involves His-445.

This sequence belongs to the CobB/CobQ family. CobQ subfamily.

It participates in cofactor biosynthesis; adenosylcobalamin biosynthesis. Catalyzes amidations at positions B, D, E, and G on adenosylcobyrinic A,C-diamide. NH(2) groups are provided by glutamine, and one molecule of ATP is hydrogenolyzed for each amidation. In Chlorobium phaeobacteroides (strain DSM 266 / SMG 266 / 2430), this protein is Cobyric acid synthase.